The chain runs to 450 residues: Glucose-6-phosphate isomerase (450 aa).

Phosphothreonine is present on T39. The active-site Proton donor is E291. Active-site residues include H312 and K426.

The protein belongs to the GPI family.

Its subcellular location is the cytoplasm. The catalysed reaction is alpha-D-glucose 6-phosphate = beta-D-fructose 6-phosphate. The protein operates within carbohydrate biosynthesis; gluconeogenesis. It functions in the pathway carbohydrate degradation; glycolysis; D-glyceraldehyde 3-phosphate and glycerone phosphate from D-glucose: step 2/4. In terms of biological role, catalyzes the reversible isomerization of glucose-6-phosphate to fructose-6-phosphate. The sequence is that of Glucose-6-phosphate isomerase from Bacillus cereus (strain G9842).